A 94-amino-acid chain; its full sequence is Small ribosomal subunit protein uS19 (94 aa).

It belongs to the universal ribosomal protein uS19 family.

In terms of biological role, protein S19 forms a complex with S13 that binds strongly to the 16S ribosomal RNA. The polypeptide is Small ribosomal subunit protein uS19 (Anaplasma phagocytophilum (strain HZ)).